The following is an 886-amino-acid chain: Isoleucine--tRNA ligase (886 aa).

The short motif at 60 to 70 (PYANGDIHIGH) is the 'HIGH' region element. Residue Glu-546 participates in L-isoleucyl-5'-AMP binding. The 'KMSKS' region motif lies at 587–591 (KMSKS). An ATP-binding site is contributed by Lys-590. Residues Cys-856, Cys-859, Cys-870, and Cys-873 each coordinate Zn(2+).

The protein belongs to the class-I aminoacyl-tRNA synthetase family. IleS type 1 subfamily. As to quaternary structure, monomer. Requires Zn(2+) as cofactor.

It localises to the cytoplasm. The catalysed reaction is tRNA(Ile) + L-isoleucine + ATP = L-isoleucyl-tRNA(Ile) + AMP + diphosphate. Catalyzes the attachment of isoleucine to tRNA(Ile). As IleRS can inadvertently accommodate and process structurally similar amino acids such as valine, to avoid such errors it has two additional distinct tRNA(Ile)-dependent editing activities. One activity is designated as 'pretransfer' editing and involves the hydrolysis of activated Val-AMP. The other activity is designated 'posttransfer' editing and involves deacylation of mischarged Val-tRNA(Ile). This Mesomycoplasma hyopneumoniae (strain J / ATCC 25934 / NCTC 10110) (Mycoplasma hyopneumoniae) protein is Isoleucine--tRNA ligase.